Consider the following 142-residue polypeptide: MGVGKPRGIRAGRKLARHRKDQRWADNDFNKRLLGSRWRNPFMGASHAKGLVTEKIGIESKQPNSAVRKCVRVLLRKNSKKIAAFVPMDGCLNFLAENDEVLVAGLGRQGHAVGDIPGVRFKVVCVKGISLLALFKGKKEKR.

The protein belongs to the universal ribosomal protein uS12 family.

The sequence is that of Small ribosomal subunit protein uS12 from Tetrahymena thermophila.